The chain runs to 1397 residues: DNA-directed RNA polymerase subunit beta' (1397 aa).

4 residues coordinate Zn(2+): Cys-75, Cys-77, Cys-90, and Cys-93. Positions 465, 467, and 469 each coordinate Mg(2+). Zn(2+) is bound by residues Cys-819, Cys-893, Cys-900, and Cys-903.

The protein belongs to the RNA polymerase beta' chain family. The RNAP catalytic core consists of 2 alpha, 1 beta, 1 beta' and 1 omega subunit. When a sigma factor is associated with the core the holoenzyme is formed, which can initiate transcription. The cofactor is Mg(2+). Requires Zn(2+) as cofactor.

It catalyses the reaction RNA(n) + a ribonucleoside 5'-triphosphate = RNA(n+1) + diphosphate. Functionally, DNA-dependent RNA polymerase catalyzes the transcription of DNA into RNA using the four ribonucleoside triphosphates as substrates. The chain is DNA-directed RNA polymerase subunit beta' from Acinetobacter baumannii (strain SDF).